The chain runs to 171 residues: 3-hydroxydecanoyl-[acyl-carrier-protein] dehydratase (171 aa).

The active site involves His-70.

This sequence belongs to the thioester dehydratase family. FabA subfamily. Homodimer.

The protein localises to the cytoplasm. It carries out the reaction a (3R)-hydroxyacyl-[ACP] = a (2E)-enoyl-[ACP] + H2O. The enzyme catalyses (3R)-hydroxydecanoyl-[ACP] = (2E)-decenoyl-[ACP] + H2O. It catalyses the reaction (2E)-decenoyl-[ACP] = (3Z)-decenoyl-[ACP]. The protein operates within lipid metabolism; fatty acid biosynthesis. Necessary for the introduction of cis unsaturation into fatty acids. Catalyzes the dehydration of (3R)-3-hydroxydecanoyl-ACP to E-(2)-decenoyl-ACP and then its isomerization to Z-(3)-decenoyl-ACP. Can catalyze the dehydratase reaction for beta-hydroxyacyl-ACPs with saturated chain lengths up to 16:0, being most active on intermediate chain length. The chain is 3-hydroxydecanoyl-[acyl-carrier-protein] dehydratase from Vibrio campbellii (strain ATCC BAA-1116).